Here is a 405-residue protein sequence, read N- to C-terminus: Envelope glycoprotein M (405 aa).

The Intravirion segment spans residues 1–17 (MKSSKNDTFVYRTWFKT). The helical transmembrane segment at 18–38 (LVVYFVMFVMSAVVPITAMFP) threads the bilayer. Over 39 to 76 (NLGYPCYFNALVDYGALNLTNYNLAHHLTPTLYLEPPE) the chain is Virion surface. Residues 77–97 (MFVYITLVFIADCVAFIYYAC) traverse the membrane as a helical segment. Topologically, residues 98-121 (GEVALIKARKKVSGLTDLSAWVSA) are intravirion. The helical transmembrane segment at 122-142 (VGSPTVLFLAILKLWSIQVFI) threads the bilayer. Over 143–149 (QVLSYKH) the chain is Virion surface. Residues 150–170 (VFLSAFVYFLHFLASVLHACA) traverse the membrane as a helical segment. Topologically, residues 171–192 (CVTRFSPVWVVKAQDNSIPQDT) are intravirion. Residues 193–215 (FLWWVVFYLKPIVTNLYLGCLAL) traverse the membrane as a helical segment. Topologically, residues 216–245 (ETLVFSLSVFLALGNSFYFMVGDMVLGAVN) are virion surface. A helical membrane pass occupies residues 246 to 266 (LFLVLPIFWYILTEVWLASFL). R267 is a topological domain (intravirion). Residues 268-288 (HNFGFYCGMFIASIILILPLV) traverse the membrane as a helical segment. The Virion surface segment spans residues 289-299 (RYEAVFVSAKL). A helical membrane pass occupies residues 300–320 (HTTVAINVAIIPILCSVAMLI). Over 321-405 (RICRIFKSMR…TTDSEEEIFP (85 aa)) the chain is Intravirion. Residues 346-405 (LESEPRPRPSRTPSPGRNRRRSSTSSSSSRSTRRQRPVSTQALISSVLPMTTDSEEEIFP) form a disordered region. A compositionally biased stretch (polar residues) spans 386-397 (QALISSVLPMTT).

This sequence belongs to the herpesviridae glycoprotein M family. In terms of assembly, interacts (via N-terminus) with gN (via N-terminus). The gM-gN heterodimer forms the gCII complex.

The protein resides in the virion membrane. Its subcellular location is the host Golgi apparatus. It localises to the host trans-Golgi network. The protein localises to the host endosome membrane. It is found in the host nucleus inner membrane. Functionally, envelope glycoprotein important for virion assembly and egress. Plays a role in the correct incorporation of gH-gL into virion membrane. Directs the glycoprotein N (gN) to the host trans-Golgi network. The sequence is that of Envelope glycoprotein M from Homo sapiens (Human).